We begin with the raw amino-acid sequence, 310 residues long: HPr kinase/phosphorylase (310 aa).

Catalysis depends on residues histidine 138 and lysine 159. 153–160 (GKSGVGKS) contributes to the ATP binding site. Serine 160 contacts Mg(2+). Aspartate 177 serves as the catalytic Proton acceptor; for phosphorylation activity. Proton donor; for dephosphorylation activity. An important for the catalytic mechanism of both phosphorylation and dephosphorylation region spans residues 201-210 (LEIRGLGIIN). Residue glutamate 202 coordinates Mg(2+). Residue arginine 243 is part of the active site. The segment at 264 to 269 (PVRPGR) is important for the catalytic mechanism of dephosphorylation.

Belongs to the HPrK/P family. In terms of assembly, homohexamer. The cofactor is Mg(2+).

It catalyses the reaction [HPr protein]-L-serine + ATP = [HPr protein]-O-phospho-L-serine + ADP + H(+). The catalysed reaction is [HPr protein]-O-phospho-L-serine + phosphate + H(+) = [HPr protein]-L-serine + diphosphate. Functionally, catalyzes the ATP- as well as the pyrophosphate-dependent phosphorylation of a specific serine residue in HPr, a phosphocarrier protein of the phosphoenolpyruvate-dependent sugar phosphotransferase system (PTS). HprK/P also catalyzes the pyrophosphate-producing, inorganic phosphate-dependent dephosphorylation (phosphorolysis) of seryl-phosphorylated HPr (P-Ser-HPr). The two antagonistic activities of HprK/P are regulated by several intracellular metabolites, which change their concentration in response to the absence or presence of rapidly metabolisable carbon sources (glucose, fructose, etc.) in the growth medium. Also phosphorylates/dephosphorylates the HPr-like catabolite repression protein crh on a specific serine residue. Therefore, by controlling the phosphorylation state of HPr and crh, HPrK/P is a sensor enzyme that plays a major role in the regulation of carbon metabolism and sugar transport: it mediates carbon catabolite repression (CCR), and regulates PTS-catalyzed carbohydrate uptake and inducer exclusion. In Bacillus velezensis (strain DSM 23117 / BGSC 10A6 / LMG 26770 / FZB42) (Bacillus amyloliquefaciens subsp. plantarum), this protein is HPr kinase/phosphorylase.